The primary structure comprises 186 residues: Interferon beta-2 (186 aa).

A signal peptide spans 1–21 (MTHRCLLQMVLLLCFSTTALS). A disulfide bond links cysteine 52 and cysteine 161. Asparagine 131 and asparagine 173 each carry an N-linked (GlcNAc...) asparagine glycan.

Belongs to the alpha/beta interferon family. As to quaternary structure, monomer.

The protein resides in the secreted. Its function is as follows. Has antiviral, antibacterial and anticancer activities. In Bos taurus (Bovine), this protein is Interferon beta-2 (IFNB2).